Here is a 408-residue protein sequence, read N- to C-terminus: Peptidase T (408 aa).

Residue H78 coordinates Zn(2+). D80 is a catalytic residue. D141 lines the Zn(2+) pocket. E175 acts as the Proton acceptor in catalysis. Residues E176, D198, and H380 each contribute to the Zn(2+) site.

The protein belongs to the peptidase M20B family. The cofactor is Zn(2+).

It is found in the cytoplasm. The catalysed reaction is Release of the N-terminal residue from a tripeptide.. Cleaves the N-terminal amino acid of tripeptides. The chain is Peptidase T from Clostridium botulinum (strain ATCC 19397 / Type A).